A 278-amino-acid polypeptide reads, in one-letter code: E3 ubiquitin-protein ligase MARCHF5 (278 aa).

Residues 6–75 form an RING-CH-type zinc finger; that stretch reads LQQMLDRSCW…PQCNAEYLIV (70 aa). 8 residues coordinate Zn(2+): cysteine 14, cysteine 17, cysteine 33, cysteine 35, histidine 43, cysteine 46, cysteine 65, and cysteine 68. Transmembrane regions (helical) follow at residues 99–119, 139–159, 209–229, and 238–258; these read FAAA…YGAV, PLFL…GKMI, ILCG…LMFS, and TILG…YFKQ.

In terms of assembly, monomer and homodimer. Interacts with MFN1, MFN2, DNM1L and FIS1. Post-translationally, autoubiquitinated leading to degradation (short half-life).

The protein resides in the mitochondrion outer membrane. The catalysed reaction is S-ubiquitinyl-[E2 ubiquitin-conjugating enzyme]-L-cysteine + [acceptor protein]-L-lysine = [E2 ubiquitin-conjugating enzyme]-L-cysteine + N(6)-ubiquitinyl-[acceptor protein]-L-lysine.. Its pathway is protein modification; protein ubiquitination. Functionally, mitochondrial E3 ubiquitin-protein ligase that plays a crucial role in the control of mitochondrial morphology by acting as a positive regulator of mitochondrial fission and as an important regulator of immune response. Plays a crucial role in maintaining mitochondrial homeostasis by regulating the dynamics of mitochondria through the ubiquitination of key proteins involved in fission and fusion such as FIS1, DNM1L and MFN1. Acts as a critical determinant of mitotic apoptosis through both MCL1-dependent and -independent pathways. Turns off persistent immune signaling by degrading oligomeric complexes of retinoic acid-inducible gene I/DDX58 and mitochondrial antiviral-signaling protein/MAVS formed upon RNA virus infection. Promotes STING-mediated type-I interferon production via 'Lys-63'-linked ubiquitination of STING1 thereby preserving its activity and preventing the formation of inactive STING1 polymers. Plays also an essential role in the formation of PEX3-containing vesicles in the de novo biogenesis of peroxisomes from mitochondria. Acts as a regulator of NLRP3 inflammasome activation on the mitochondria by mediating the 'Lys-27'-linked polyubiquitination of NLRP3, positively regulating the NLRP3-NEK7 complex formation and NLRP3 oligomerization. The chain is E3 ubiquitin-protein ligase MARCHF5 (MARCHF5) from Bos taurus (Bovine).